The chain runs to 205 residues: Methylthioribulose-1-phosphate dehydratase (205 aa).

2 residues coordinate Zn(2+): histidine 96 and histidine 98.

This sequence belongs to the aldolase class II family. MtnB subfamily. The cofactor is Zn(2+).

The catalysed reaction is 5-(methylsulfanyl)-D-ribulose 1-phosphate = 5-methylsulfanyl-2,3-dioxopentyl phosphate + H2O. Its pathway is amino-acid biosynthesis; L-methionine biosynthesis via salvage pathway; L-methionine from S-methyl-5-thio-alpha-D-ribose 1-phosphate: step 2/6. Catalyzes the dehydration of methylthioribulose-1-phosphate (MTRu-1-P) into 2,3-diketo-5-methylthiopentyl-1-phosphate (DK-MTP-1-P). This Pseudomonas aeruginosa (strain UCBPP-PA14) protein is Methylthioribulose-1-phosphate dehydratase.